Here is a 270-residue protein sequence, read N- to C-terminus: Phosphatidylglycerol--prolipoprotein diacylglyceryl transferase (270 aa).

Helical transmembrane passes span 14-34 (VAFT…ILAL), 60-80 (YFFW…IAIY), 103-123 (FVGI…LATI), 133-153 (LWQL…FGRI), 181-201 (PSQL…LFFY), 209-229 (GELI…CEFF), and 235-255 (GIGF…LMFF). Arg-152 provides a ligand contact to a 1,2-diacyl-sn-glycero-3-phospho-(1'-sn-glycerol).

The protein belongs to the Lgt family.

It localises to the cell inner membrane. The catalysed reaction is L-cysteinyl-[prolipoprotein] + a 1,2-diacyl-sn-glycero-3-phospho-(1'-sn-glycerol) = an S-1,2-diacyl-sn-glyceryl-L-cysteinyl-[prolipoprotein] + sn-glycerol 1-phosphate + H(+). The protein operates within protein modification; lipoprotein biosynthesis (diacylglyceryl transfer). Catalyzes the transfer of the diacylglyceryl group from phosphatidylglycerol to the sulfhydryl group of the N-terminal cysteine of a prolipoprotein, the first step in the formation of mature lipoproteins. In Campylobacter curvus (strain 525.92), this protein is Phosphatidylglycerol--prolipoprotein diacylglyceryl transferase.